The primary structure comprises 278 residues: HTH-type transcriptional activator RhaS (278 aa).

The 99-residue stretch at 174 to 272 (NLLLAWLEDH…NWSPRDIRQG (99 aa)) folds into the HTH araC/xylS-type domain. 2 DNA-binding regions (H-T-H motif) span residues 191 to 212 (DAVADQFSLSLRTLHRQLKQQT) and 239 to 262 (VTDIAYRCGFSDSNHFSTLFRREF).

Binds DNA as a dimer.

Its subcellular location is the cytoplasm. In terms of biological role, activates expression of the rhaBAD and rhaT operons. The protein is HTH-type transcriptional activator RhaS of Shigella boydii serotype 4 (strain Sb227).